Consider the following 348-residue polypeptide: Caricain (348 aa).

The N-terminal stretch at 1–16 is a signal peptide; it reads MAMIPSISKLLFVAIC. The propeptide at 17 to 132 is activation peptide; sequence LFVHMSVSFG…EEFINEDTVN (116 aa). N-linked (GlcNAc...) asparagine glycosylation occurs at asparagine 86. 3 disulfides stabilise this stretch: cysteine 154-cysteine 195, cysteine 188-cysteine 227, and cysteine 285-cysteine 336. The active site involves cysteine 157. Position 157 (cysteine 157) interacts with E64. Residues histidine 291 and asparagine 311 contribute to the active site.

Belongs to the peptidase C1 family. In terms of assembly, monomer.

It catalyses the reaction Hydrolysis of proteins with broad specificity for peptide bonds, similar to those of papain and chymopapain.. Repressed by the active-site-directed cysteine protease inhibitor E64 (L-trans-epoxysuccinyl-leucylamide-(4-guanido)-butane) produced by Aspergillus japonicus. In terms of biological role, cysteine proteinase with a high level of diversity in substrate specificity. This chain is Caricain, found in Carica papaya (Papaya).